A 197-amino-acid chain; its full sequence is Female-specific protein transformer (197 aa).

Composition is skewed to basic and acidic residues over residues 1 to 17 (MKMD…DSRG) and 24 to 39 (RERE…DSRK). 2 disordered regions span residues 1–136 (MKMD…PKII) and 158–197 (GYQR…RPPY). 2 stretches are compositionally biased toward basic residues: residues 58-75 (RRLR…RSRS) and 84-127 (SRHR…RSPH). Residues 163-172 (PRPPPFPPAP) are compositionally biased toward pro residues.

The protein localises to the nucleus speckle. In terms of biological role, member of the regulatory pathway controlling female somatic sexual differentiation, regulated by Sxl. Activates dsx female-specific splicing by promoting the formation of a splicing enhancer complex which consists of tra, tra2 and sr proteins. Together with tra-2, plays a role in switching fru splicing from the male-specific pattern to the female-specific pattern through activation of the female-specific fru 5'-splice site. No known function in males. This Drosophila melanogaster (Fruit fly) protein is Female-specific protein transformer (tra).